We begin with the raw amino-acid sequence, 972 residues long: Microtubule-associated protein 1S (972 aa).

The tract at residues 1–715 is necessary for the microtubule-organizing center localization; sequence MAAVMAAPEP…SESLPTLSDS (715 aa). Over residues 454-469 the composition is skewed to polar residues; that stretch reads LEVPSRANSQDSLASR. Residues 454-632 are disordered; the sequence is LEVPSRANSQ…PHSTEVDESL (179 aa). Phosphoserine is present on S462. Over residues 489-505 the composition is skewed to basic and acidic residues; the sequence is VRREPALATRDQKKDTK. Composition is skewed to pro residues over residues 537–550 and 564–581; these read APVP…PAPE and PPAP…PPTA. Residues S585, S590, and S592 each carry the phosphoserine modification. Positions 600 to 972 are necessary for interaction with RASSF1; sequence PDASPSATTP…EAFPACKVEF (373 aa). Residues 602–620 show a composition bias toward low complexity; it reads ASPSATTPTLTTPSLPAEL. Residues 644–879 are necessary for association with microtubules; the sequence is DAGLSLPLRL…GGGAGHLDQN (236 aa). A phosphoserine mark is found at S659 and S683. A disordered region spans residues 671–854; sequence CEFSHRKPPP…SSGPSSRPAP (184 aa). Residues 702–721 are compositionally biased toward low complexity; it reads PTSVSESLPTLSDSDPVPVA. S723 carries the post-translational modification Phosphoserine. Residues 737-748 are compositionally biased toward pro residues; sequence LPTPRVPPPLPD. Positions 781-800 are enriched in low complexity; sequence ARPSSASAAPRAATVAAKTK. Residues 874–972 are necessary for association with actin; that stretch reads GHLDQNFFLR…EAFPACKVEF (99 aa). Residues 880–904 are necessary for the mitochondrial aggregation and genome destruction; sequence FFLRVRALCYVISGQGQRQEEGLRG.

Belongs to the MAP1A/MAP1B/MAP1S family. As to quaternary structure, heterodimer of a heavy and a light chain. Interacts with microtubules and actin. Both MAP1S heavy and light chains interact with microtubules. MAP1S light chain interacts with actin. Interacts with LRPPRC, RASSF1, microtubules and VCY2. Interacts (via C-terminus) with GAN (via Kelch domains). Interacts with WDR47 (via N-terminus of light chain). Interacts with ESR1. Expressed in cortex cerebellum, dorsal root ganglia, frontal cortex, hippocampus, hypothalamus, mesencephalon, medulla oblongata, occipital cortex, pons, spinal cord, striatum of the brain, neurons, heart, testis and skeletal muscle (at protein level).

It localises to the nucleus. The protein resides in the cytoplasm. It is found in the cytosol. The protein localises to the cytoskeleton. Its subcellular location is the spindle. Functionally, microtubule-associated protein that mediates aggregation of mitochondria resulting in cell death and genomic destruction (MAGD). Plays a role in anchoring the microtubule organizing center to the centrosomes. Binds to DNA. Plays a role in apoptosis. Involved in the formation of microtubule bundles. The polypeptide is Microtubule-associated protein 1S (Map1s) (Rattus norvegicus (Rat)).